The primary structure comprises 291 residues: MRVVVLMGGRSSEREISLKTGKAVAKALRELGHEVYELDLDKELPCKLLEIKPDKVFIALHGRYGEDGTVQGLLEILDIPYTGSDTIASAVSIDKDFTKRIVKSLGINTPDWETFISEGDVLNTEWNKFPAVVKPVREGSSVGLKIVESLEELKEYALDLLKKTERVMVEEFVEGRDMTVGILKGEALPVVEIIPKKGVYDYECKYTKGMSEYRILKDEKLSKKLQEISLKISKFLSLKDFARIDFRVTKEGKIFFLEVNTIPGMTELSLLPMAAKEKGMDFKKLISIIIT.

Residues 99 to 291 (KRIVKSLGIN…FKKLISIIIT (193 aa)) enclose the ATP-grasp domain. 125–179 (EWNKFPAVVKPVREGSSVGLKIVESLEELKEYALDLLKKTERVMVEEFVEGRDMT) lines the ATP pocket. Positions 245, 258, and 260 each coordinate Mg(2+).

Belongs to the D-alanine--D-alanine ligase family. Requires Mg(2+) as cofactor. The cofactor is Mn(2+).

Its subcellular location is the cytoplasm. It catalyses the reaction 2 D-alanine + ATP = D-alanyl-D-alanine + ADP + phosphate + H(+). Its pathway is cell wall biogenesis; peptidoglycan biosynthesis. Its function is as follows. Cell wall formation. This chain is D-alanine--D-alanine ligase, found in Aquifex aeolicus (strain VF5).